The primary structure comprises 359 residues: Peroxisome assembly protein 12 (359 aa).

The Peroxisomal matrix segment spans residues 1-19; it reads MAEHGAHFTAASVADDQPS. The chain crosses the membrane as a helical span at residues 20-47; that stretch reads IFEVVAQDSLMTAVRPALQHVVKVLAES. At 48-51 the chain is on the cytoplasmic side; that stretch reads NPTH. A helical membrane pass occupies residues 52-76; it reads YGFLWRWFDEIFTLLDLLLQQHYLS. Residues 77–109 are Peroxisomal matrix-facing; sequence RTSASFSENFYGLKRIVMGDTHKSQRLASAGLP. Residues 110–139 form a helical membrane-spanning segment; the sequence is KQQLWKSIMFLVLLPYLKVKLEKLVSSLRE. Residues 140-144 lie on the Cytoplasmic side of the membrane; it reads EDEYS. The chain crosses the membrane as a helical span at residues 145 to 183; sequence IHPPSSRWKRFYRAFLAAYPFVNMAWEGWFLVQQLRYIL. The Peroxisomal matrix segment spans residues 184-249; it reads GKAQHHSPLL…VGGVALSLST (66 aa). The helical transmembrane segment at 250-277 threads the bilayer; that stretch reads GLSVGVFFLQFLDWWYSSENQETIKSLT. Residues 278-359 lie on the Cytoplasmic side of the membrane; it reads ALPTPPPPVH…HLIKLYSPEN (82 aa). Zn(2+)-binding residues include cysteine 304, cysteine 307, cysteine 325, and cysteine 328. The RING-type; degenerate zinc-finger motif lies at 304–343; the sequence is CPLCRKTRVNDTVLATSGYVFCYRCVFHYVRSHQACPITG.

It belongs to the pex2/pex10/pex12 family. In terms of assembly, component of the PEX2-PEX10-PEX12 retrotranslocation channel, composed of PEX2, PEX10 and PEX12. Interacts with PEX19 via its cytoplasmic domain.

It is found in the peroxisome membrane. Its pathway is protein modification; protein ubiquitination. Functionally, component of a retrotranslocation channel required for peroxisome organization by mediating export of the PEX5 receptor from peroxisomes to the cytosol, thereby promoting PEX5 recycling. The retrotranslocation channel is composed of PEX2, PEX10 and PEX12; each subunit contributing transmembrane segments that coassemble into an open channel that specifically allows the passage of PEX5 through the peroxisomal membrane. PEX12 also regulates PEX5 recycling by activating the E3 ubiquitin-protein ligase activity of PEX10. When PEX5 recycling is compromised, PEX12 stimulates PEX10-mediated polyubiquitination of PEX5, leading to its subsequent degradation. The polypeptide is Peroxisome assembly protein 12 (Homo sapiens (Human)).